The sequence spans 366 residues: MSTTVTVLTDTWGRRAKRFEIEGYAKILAIGTATPANWVDQTTYPDFYFRITNSQHLLEHKEKFRRICNKSKIRKRHLVLTEELLQKNPSLCTYNETSLNTRQDILVSEVPKLGKEAAMKAIKEWGRPISEITHLVFCTTSGVDMPGADFRLTKLLGLNSSVKRLMMYQQGCNAGAAMLRLAKDLAESNKGGRILVVCSEITINIFRGPSLEQDDNLLAQCLFGDGSAAMIVGTDPRPDLETPLFELVSSAQTIVPNTDSHLKLTLREMGLTFHCSRAVPSVLAENVEDCLVKAFEPYGISDWNSIFWVFHPGGNAIVDRVEERLGLGAQRFRASRDVLSEYGNLTSACVLFILDEVRNKSKKNEQ.

Cysteine 172 is a catalytic residue.

It belongs to the thiolase-like superfamily. Chalcone/stilbene synthases family.

It catalyses the reaction (E)-4-coumaroyl-CoA + 3 malonyl-CoA + 3 H(+) = 2',4,4',6'-tetrahydroxychalcone + 3 CO2 + 4 CoA. The protein operates within secondary metabolite biosynthesis; flavonoid biosynthesis. In terms of biological role, the primary product of this enzyme is 4,2',4',6'-tetrahydroxychalcone (also termed naringenin-chalcone or chalcone) which can under specific conditions spontaneously isomerize into naringenin. The polypeptide is Chalcone synthase B (CHSB) (Ipomoea triloba (Trilobed morning glory)).